The primary structure comprises 212 residues: Imidazole glycerol phosphate synthase subunit HisH (212 aa).

The region spanning 2-212 (RVVVIDYNGG…ILGNFLRWTS (211 aa)) is the Glutamine amidotransferase type-1 domain. Cys-85 serves as the catalytic Nucleophile. Residues His-192 and Glu-194 contribute to the active site.

As to quaternary structure, heterodimer of HisH and HisF.

The protein resides in the cytoplasm. The catalysed reaction is 5-[(5-phospho-1-deoxy-D-ribulos-1-ylimino)methylamino]-1-(5-phospho-beta-D-ribosyl)imidazole-4-carboxamide + L-glutamine = D-erythro-1-(imidazol-4-yl)glycerol 3-phosphate + 5-amino-1-(5-phospho-beta-D-ribosyl)imidazole-4-carboxamide + L-glutamate + H(+). The enzyme catalyses L-glutamine + H2O = L-glutamate + NH4(+). It participates in amino-acid biosynthesis; L-histidine biosynthesis; L-histidine from 5-phospho-alpha-D-ribose 1-diphosphate: step 5/9. In terms of biological role, IGPS catalyzes the conversion of PRFAR and glutamine to IGP, AICAR and glutamate. The HisH subunit catalyzes the hydrolysis of glutamine to glutamate and ammonia as part of the synthesis of IGP and AICAR. The resulting ammonia molecule is channeled to the active site of HisF. The protein is Imidazole glycerol phosphate synthase subunit HisH of Gluconobacter oxydans (strain 621H) (Gluconobacter suboxydans).